We begin with the raw amino-acid sequence, 83 residues long: Apolipoprotein C-I (83 aa).

The N-terminal stretch at 1-26 (MRLILSLPVLAVVLAMVLEGPAPAQA) is a signal peptide.

Belongs to the apolipoprotein C1 family.

It localises to the secreted. In terms of biological role, inhibitor of lipoprotein binding to the low density lipoprotein (LDL) receptor, LDL receptor-related protein, and very low density lipoprotein (VLDL) receptor. Associates with high density lipoproteins (HDL) and the triacylglycerol-rich lipoproteins in the plasma and makes up about 10% of the protein of the VLDL and 2% of that of HDL. Appears to interfere directly with fatty acid uptake and is also the major plasma inhibitor of cholesteryl ester transfer protein (CETP). Binds free fatty acids and reduces their intracellular esterification. Modulates the interaction of APOE with beta-migrating VLDL and inhibits binding of beta-VLDL to the LDL receptor-related protein. The sequence is that of Apolipoprotein C-I (APOC1) from Eonycteris spelaea (Lesser dawn bat).